We begin with the raw amino-acid sequence, 140 residues long: Putative nickel-responsive regulator (140 aa).

Ni(2+)-binding residues include His81, His92, His94, and Cys100.

The protein belongs to the transcriptional regulatory CopG/NikR family. Ni(2+) serves as cofactor.

In terms of biological role, transcriptional regulator. This Methanothrix thermoacetophila (strain DSM 6194 / JCM 14653 / NBRC 101360 / PT) (Methanosaeta thermophila) protein is Putative nickel-responsive regulator.